A 217-amino-acid chain; its full sequence is Ribosome maturation factor RimP (217 aa).

It belongs to the RimP family.

It is found in the cytoplasm. Its function is as follows. Required for maturation of 30S ribosomal subunits. This Nocardia farcinica (strain IFM 10152) protein is Ribosome maturation factor RimP.